The following is a 317-amino-acid chain: Ribosomal protein L11 methyltransferase (317 aa).

Residues Thr-139, Gly-162, Asp-184, and Asn-226 each contribute to the S-adenosyl-L-methionine site. The tract at residues 274–297 (EHVATRPDPASPGGDRRAGRGDAG) is disordered.

It belongs to the methyltransferase superfamily. PrmA family.

It is found in the cytoplasm. The catalysed reaction is L-lysyl-[protein] + 3 S-adenosyl-L-methionine = N(6),N(6),N(6)-trimethyl-L-lysyl-[protein] + 3 S-adenosyl-L-homocysteine + 3 H(+). Functionally, methylates ribosomal protein L11. This chain is Ribosomal protein L11 methyltransferase, found in Sorangium cellulosum (strain So ce56) (Polyangium cellulosum (strain So ce56)).